We begin with the raw amino-acid sequence, 255 residues long: Dehydrogenase/reductase SDR family member 11 (255 aa).

A signal peptide spans 1–25 (MERWRDRLALVTGASGGIGAAVARA). NADP(+)-binding positions include 13–18 (GASGGI), 38–39 (RT), E44, 65–66 (DL), and N92. Residues S146 and Y161 each contribute to the substrate site. Residues Y161, K165, 196-199 (VETQ), and K203 contribute to the NADP(+) site. Y161 (proton acceptor) is an active-site residue.

It belongs to the short-chain dehydrogenases/reductases (SDR) family.

Its subcellular location is the secreted. It catalyses the reaction a 3beta-hydroxysteroid + NADP(+) = a 3-oxosteroid + NADPH + H(+). It carries out the reaction 17beta-estradiol + NAD(+) = estrone + NADH + H(+). The catalysed reaction is 17beta-estradiol + NADP(+) = estrone + NADPH + H(+). Its pathway is steroid biosynthesis; estrogen biosynthesis. Inhibited by flavonoids including apigenin, luteolin, genistein, kaempferol and quercetin and also by carbenoxolone, zearalenone, glycyrrhetinic, curcumin and flufenamic acid. Catalyzes the conversion of the 17-keto group of estrone, 4- and 5-androstenes and 5-alpha-androstanes into their 17-beta-hydroxyl metabolites and the conversion of the 3-keto group of 3-, 3,17- and 3,20- diketosteroids into their 3-hydroxyl metabolites. Exhibits reductive 3-beta-hydroxysteroid dehydrogenase activity toward 5-beta-androstanes, 5-beta-pregnanes, 4-pregnenes and bile acids. May also reduce endogenous and exogenous alpha-dicarbonyl compounds and xenobiotic alicyclic ketones. The protein is Dehydrogenase/reductase SDR family member 11 (DHRS11) of Bos taurus (Bovine).